The following is a 220-amino-acid chain: Nitrile hydratase subunit beta (220 aa).

This sequence belongs to the nitrile hydratase subunit beta family. Heterodimer of an alpha and a beta chain.

The enzyme catalyses an aliphatic primary amide = an aliphatic nitrile + H2O. In terms of biological role, NHase catalyzes the hydration of various nitrile compounds to the corresponding amides. The protein is Nitrile hydratase subunit beta (nthB) of Pseudomonas chlororaphis (Pseudomonas aureofaciens).